The chain runs to 725 residues: Beta-adducin (725 aa).

The disordered stretch occupies residues 1–22 (MSEDTVPEAASPPPSQGQHYFD). Phosphoserine occurs at positions 11 and 25. A Phosphothreonine modification is found at Thr55. Phosphoserine occurs at positions 60 and 344. Residues 425–444 (KQQKEKTRWLNTPNTYLRVN) are interaction with calmodulin. Residues 525 to 725 (AEKSRSPSTE…KSKKKEKVES (201 aa)) are disordered. 2 positions are modified to phosphoserine: Ser530 and Ser532. Thr533 bears the Phosphothreonine mark. At Ser535 the chain carries Phosphoserine. The residue at position 561 (Thr561) is a Phosphothreonine. Basic and acidic residues predominate over residues 566 to 588 (EEYKKEVERKKLEQEQEGEKDAA). Phosphoserine occurs at positions 594, 598, 602, and 606. Positions 596 to 621 (VKSTPASPVQSPTRAGTKSPAVSPSK) are enriched in polar residues. Thr612 is subject to Phosphothreonine. A phosphoserine mark is found at Ser614, Ser618, and Ser620. Composition is skewed to basic and acidic residues over residues 622 to 631 (ASEDAKKTEV) and 639 to 654 (EPEKPEGVVVNGKEEE). Thr674 is subject to Phosphothreonine. Ser678, Ser685, Ser688, Ser692, Ser696, Ser698, Ser700, Ser702, and Ser712 each carry phosphoserine. Residues 687-700 (TSGPLSPEGSPSKS) show a composition bias toward low complexity. Residues 701-725 (PSKKKKKFRTPSFLKKSKKKEKVES) show a composition bias toward basic residues. Residues 703-720 (KKKKKFRTPSFLKKSKKK) are interaction with calmodulin.

Belongs to the aldolase class II family. Adducin subfamily. As to quaternary structure, heterodimer of an alpha and a beta subunit. Found in a complex with ADD2, DMTN and SLC2A1. Interacts with SLC2A1. As to expression, found in liver, kidney, spleen, heart and brain.

The protein resides in the cytoplasm. The protein localises to the cytoskeleton. It localises to the cell membrane. Its function is as follows. Membrane-cytoskeleton-associated protein that promotes the assembly of the spectrin-actin network. Binds to the erythrocyte membrane receptor SLC2A1/GLUT1 and may therefore provide a link between the spectrin cytoskeleton to the plasma membrane. Binds to calmodulin. Calmodulin binds preferentially to the beta subunit. This is Beta-adducin (Add2) from Rattus norvegicus (Rat).